Reading from the N-terminus, the 462-residue chain is Cysteine--tRNA ligase (462 aa).

A Zn(2+)-binding site is contributed by Cys-27. The short motif at 29-39 is the 'HIGH' region element; that stretch reads PTVYNYIHVGN. Zn(2+) contacts are provided by Cys-209, His-234, and Glu-238. The 'KMSKS' region motif lies at 266 to 270; the sequence is KMSKS. Residue Lys-269 coordinates ATP.

The protein belongs to the class-I aminoacyl-tRNA synthetase family. In terms of assembly, monomer. The cofactor is Zn(2+).

The protein resides in the cytoplasm. The enzyme catalyses tRNA(Cys) + L-cysteine + ATP = L-cysteinyl-tRNA(Cys) + AMP + diphosphate. This Finegoldia magna (strain ATCC 29328 / DSM 20472 / WAL 2508) (Peptostreptococcus magnus) protein is Cysteine--tRNA ligase.